Here is a 356-residue protein sequence, read N- to C-terminus: UDP-N-acetylglucosamine--N-acetylmuramyl-(pentapeptide) pyrophosphoryl-undecaprenol N-acetylglucosamine transferase (356 aa).

Serine 198 and glutamine 289 together coordinate UDP-N-acetyl-alpha-D-glucosamine.

This sequence belongs to the glycosyltransferase 28 family. MurG subfamily.

It localises to the cell membrane. The catalysed reaction is Mur2Ac(oyl-L-Ala-gamma-D-Glu-L-Lys-D-Ala-D-Ala)-di-trans,octa-cis-undecaprenyl diphosphate + UDP-N-acetyl-alpha-D-glucosamine = beta-D-GlcNAc-(1-&gt;4)-Mur2Ac(oyl-L-Ala-gamma-D-Glu-L-Lys-D-Ala-D-Ala)-di-trans,octa-cis-undecaprenyl diphosphate + UDP + H(+). It functions in the pathway cell wall biogenesis; peptidoglycan biosynthesis. Functionally, cell wall formation. Catalyzes the transfer of a GlcNAc subunit on undecaprenyl-pyrophosphoryl-MurNAc-pentapeptide (lipid intermediate I) to form undecaprenyl-pyrophosphoryl-MurNAc-(pentapeptide)GlcNAc (lipid intermediate II). This Streptococcus thermophilus (strain CNRZ 1066) protein is UDP-N-acetylglucosamine--N-acetylmuramyl-(pentapeptide) pyrophosphoryl-undecaprenol N-acetylglucosamine transferase.